We begin with the raw amino-acid sequence, 285 residues long: Diaminopimelate epimerase (285 aa).

Substrate contacts are provided by N14 and N67. The active-site Proton donor is the C76. Residues 77-78 (GN), N166, N199, and 217-218 (ER) each bind substrate. C226 functions as the Proton acceptor in the catalytic mechanism. 227-228 (GT) lines the substrate pocket.

This sequence belongs to the diaminopimelate epimerase family. Homodimer.

The protein resides in the cytoplasm. The enzyme catalyses (2S,6S)-2,6-diaminopimelate = meso-2,6-diaminopimelate. It participates in amino-acid biosynthesis; L-lysine biosynthesis via DAP pathway; DL-2,6-diaminopimelate from LL-2,6-diaminopimelate: step 1/1. In terms of biological role, catalyzes the stereoinversion of LL-2,6-diaminopimelate (L,L-DAP) to meso-diaminopimelate (meso-DAP), a precursor of L-lysine and an essential component of the bacterial peptidoglycan. This is Diaminopimelate epimerase from Bacillus licheniformis (strain ATCC 14580 / DSM 13 / JCM 2505 / CCUG 7422 / NBRC 12200 / NCIMB 9375 / NCTC 10341 / NRRL NRS-1264 / Gibson 46).